The chain runs to 158 residues: VRDSCEPVMQFFGFYWPEMLKCDKFPEGDVCIAMTPPNATEASKPQGTTVCPPCDNELKSEAIIEHLCASEFALRMKIKEVKKENGDKKIVPKKKKPLKLGPIKKKELKRLVLFLKNGADCPCHQLDNLSHNFLIMGRKVKSQYLLTAIHKWDKKNKE.

Residues Val1–Met34 form the FZ domain. Residue Asn38 is glycosylated (N-linked (GlcNAc...) asparagine). 2 disulfide bridges follow: Cys51–Cys121 and Cys68–Cys123. The NTR domain maps to Cys51–Glu158.

The protein belongs to the secreted frizzled-related protein (sFRP) family. As to quaternary structure, interacts with WNT4, WNT1, WNT2, WNT8, MYOC and FRZD6.

The protein resides in the secreted. Its function is as follows. Soluble frizzled-related proteins (sFRPS) function as modulators of Wnt signaling through direct interaction with Wnts. They have a role in regulating cell growth and differentiation in specific cell types. SFRP1 decreases intracellular beta-catenin levels. Has antiproliferative effects on vascular cells, in vitro and in vivo, and can induce, in vivo, an angiogenic response. In vascular cell cycle, delays the G1 phase and entry into the S phase. In kidney development, inhibits tubule formation and bud growth in metanephroi. Inhibits WNT1/WNT4-mediated TCF-dependent transcription. This Rattus norvegicus (Rat) protein is Secreted frizzled-related protein 1 (Sfrp1).